A 251-amino-acid chain; its full sequence is Probable inactive cytidine deaminase 4 (251 aa).

A substrate-binding site is contributed by 61–63; it reads NVE. Residue glutamate 76 is the Proton donor of the active site. Residues 136-251 enclose the CMP/dCMP-type deaminase domain; the sequence is EHCSHLKCRA…VFRCHKTAEN (116 aa).

This sequence belongs to the cytidine and deoxycytidylate deaminase family. Homodimer.

The protein is Probable inactive cytidine deaminase 4 (CDA4) of Arabidopsis thaliana (Mouse-ear cress).